We begin with the raw amino-acid sequence, 287 residues long: Large ribosomal subunit protein uL2 (287 aa).

The tract at residues 221–287 is disordered; it reads RGSVMNPCDH…SKRSRGGRDS (67 aa). Over residues 258-287 the composition is skewed to basic residues; that stretch reads KTRKRNKPSNRFVLRKRRRVSKRSRGGRDS.

This sequence belongs to the universal ribosomal protein uL2 family. In terms of assembly, part of the 50S ribosomal subunit. Forms a bridge to the 30S subunit in the 70S ribosome.

In terms of biological role, one of the primary rRNA binding proteins. Required for association of the 30S and 50S subunits to form the 70S ribosome, for tRNA binding and peptide bond formation. It has been suggested to have peptidyltransferase activity; this is somewhat controversial. Makes several contacts with the 16S rRNA in the 70S ribosome. This is Large ribosomal subunit protein uL2 from Prochlorococcus marinus (strain SARG / CCMP1375 / SS120).